The following is a 78-amino-acid chain: Acyl carrier protein (78 aa).

The region spanning 2-77 is the Carrier domain; it reads STIEERVKKI…AAIDYVNSHQ (76 aa). O-(pantetheine 4'-phosphoryl)serine is present on Ser-37.

The protein belongs to the acyl carrier protein (ACP) family. In terms of processing, 4'-phosphopantetheine is transferred from CoA to a specific serine of apo-ACP by AcpS. This modification is essential for activity because fatty acids are bound in thioester linkage to the sulfhydryl of the prosthetic group.

It localises to the cytoplasm. The protein operates within lipid metabolism; fatty acid biosynthesis. Carrier of the growing fatty acid chain in fatty acid biosynthesis. The sequence is that of Acyl carrier protein from Pseudomonas putida (strain W619).